The chain runs to 291 residues: Beta-lactamase CTX-M-15 (291 aa).

Positions 1-28 (MVKKSLRQFTLMATATVTLLLGSVPLYA) are cleaved as a signal peptide. Catalysis depends on serine 73, which acts as the Nucleophile; acyl-ester intermediate. Residues lysine 76, serine 133, glutamate 169, and serine 240 each coordinate a beta-lactam.

Belongs to the class-A beta-lactamase family. In terms of assembly, monomer.

It is found in the secreted. The catalysed reaction is a beta-lactam + H2O = a substituted beta-amino acid. With respect to regulation, inhibited by the beta-lactamase-blocking agents clavulanic acid and avibactam, via a covalent binding to Ser-73. Its function is as follows. Extended-spectrum beta-lactamase (ESBL) which confers resistance to penicillins, as well as first, second, third and fourth-generation cephalosporins. Has cefotaxime- and ceftazidime-hydrolyzing activity. Inactive against the carbapenem antibiotics, imipenem, meropenem and ertapenem. This chain is Beta-lactamase CTX-M-15, found in Escherichia coli O25b:H4.